We begin with the raw amino-acid sequence, 335 residues long: Histidinol-phosphate aminotransferase (335 aa).

Residue Lys202 is modified to N6-(pyridoxal phosphate)lysine.

This sequence belongs to the class-II pyridoxal-phosphate-dependent aminotransferase family. Histidinol-phosphate aminotransferase subfamily. As to quaternary structure, homodimer. Requires pyridoxal 5'-phosphate as cofactor.

The catalysed reaction is L-histidinol phosphate + 2-oxoglutarate = 3-(imidazol-4-yl)-2-oxopropyl phosphate + L-glutamate. Its pathway is amino-acid biosynthesis; L-histidine biosynthesis; L-histidine from 5-phospho-alpha-D-ribose 1-diphosphate: step 7/9. The polypeptide is Histidinol-phosphate aminotransferase (Thermotoga maritima (strain ATCC 43589 / DSM 3109 / JCM 10099 / NBRC 100826 / MSB8)).